Reading from the N-terminus, the 599-residue chain is Sulfite reductase [NADPH] flavoprotein alpha-component (599 aa).

The region spanning 64-202 (ITLISASQTG…AAAEWRARVV (139 aa)) is the Flavodoxin-like domain. Residues 70–75 (SQTGNA), 117–120 (STQG), and 153–162 (LGDTSYEFFC) contribute to the FMN site. One can recognise an FAD-binding FR-type domain in the interval 234–448 (EAPLTATLSV…IEHNDNFRLP (215 aa)). Residues T322, A356, 386-389 (RLYS), 404-406 (TVG), Y410, and 419-422 (GGAS) contribute to the FAD site. NADP(+) contacts are provided by residues 519 to 520 (SR), 525 to 529 (KIYVQ), and D561. FAD is bound at residue Y599.

The protein belongs to the NADPH-dependent sulphite reductase flavoprotein subunit CysJ family. In the N-terminal section; belongs to the flavodoxin family. It in the C-terminal section; belongs to the flavoprotein pyridine nucleotide cytochrome reductase family. As to quaternary structure, alpha(8)-beta(8). The alpha component is a flavoprotein, the beta component is a hemoprotein. FAD serves as cofactor. FMN is required as a cofactor.

The catalysed reaction is hydrogen sulfide + 3 NADP(+) + 3 H2O = sulfite + 3 NADPH + 4 H(+). Its pathway is sulfur metabolism; hydrogen sulfide biosynthesis; hydrogen sulfide from sulfite (NADPH route): step 1/1. In terms of biological role, component of the sulfite reductase complex that catalyzes the 6-electron reduction of sulfite to sulfide. This is one of several activities required for the biosynthesis of L-cysteine from sulfate. The flavoprotein component catalyzes the electron flow from NADPH -&gt; FAD -&gt; FMN to the hemoprotein component. In Klebsiella pneumoniae subsp. pneumoniae (strain ATCC 700721 / MGH 78578), this protein is Sulfite reductase [NADPH] flavoprotein alpha-component.